We begin with the raw amino-acid sequence, 259 residues long: Gene 2 protein (259 aa).

2 stretches are compositionally biased toward basic and acidic residues: residues 1 to 12 and 21 to 36; these read MPPTELEKKRGE and QKQH…AKRK. A disordered region spans residues 1-36; the sequence is MPPTELEKKRGEYNQIAIDAQKQHAPTDEKREAKRK.

In Mycobacterium (Mycobacteriophage L5), this protein is Gene 2 protein (2).